Here is a 364-residue protein sequence, read N- to C-terminus: Apelin receptor (364 aa).

At Met-1 to Leu-39 the chain is on the extracellular side. Asn-21 is a glycosylation site (N-linked (GlcNAc...) asparagine). 2 disulfides stabilise this stretch: Cys-28–Cys-288 and Cys-110–Cys-187. The chain crosses the membrane as a helical span at residues Leu-40–Phe-60. Topologically, residues Thr-61–Asn-78 are cytoplasmic. A helical transmembrane segment spans residues Leu-79–Leu-99. Over Gly-100–Leu-112 the chain is Extracellular. The chain crosses the membrane as a helical span at residues Ser-113–Phe-133. The Cytoplasmic portion of the chain corresponds to Asp-134–Ser-153. The chain crosses the membrane as a helical span at residues Ile-154–Ile-174. Residues Leu-175–Asn-201 lie on the Extracellular side of the membrane. N-linked (GlcNAc...) asparagine glycosylation occurs at Asn-183. The chain crosses the membrane as a helical span at residues Phe-202 to Leu-222. Residues Met-223–Arg-250 are Cytoplasmic-facing. A helical membrane pass occupies residues Leu-251–Ile-271. Residues Leu-272–His-298 lie on the Extracellular side of the membrane. A helical membrane pass occupies residues Pro-299–Phe-319. Topologically, residues Asp-320 to Val-364 are cytoplasmic.

The protein belongs to the G-protein coupled receptor 1 family.

It localises to the cell membrane. In terms of biological role, g protein-coupled receptor for peptide hormones apelin (apln) and apelin receptor early endogenous ligand (apela), that plays a role in the regulation of normal cardiovascular function and fluid homeostasis. When acting as apelin receptor, activates both G(i) protein pathway that inhibits adenylate cyclase activity, and the beta-arrestin pathway that promotes internalization of the receptor. Also functions as mechanoreceptor that is activated by pathological stimuli in a G-protein-independent fashion to induce beta-arrestin signaling, hence eliciting cardiac hypertrophy. However, the presence of apelin ligand blunts cardiac hypertrophic induction from APLNR/APJ on response to pathological stimuli. Plays a key role in early development such as gastrulation, blood vessels formation and heart morphogenesis by acting as a receptor for apela hormone, promoting endoderm and mesendoderm cell migration and regulating the migration of cells fated to become myocardial progenitors, respectively. Promotes angioblast migration toward the embryonic midline, i.e. the position of the future vessel formation, during vasculogenesis. May promote sinus venosus (SV)-derived endothelial cells migration into the developing heart to promote coronary blood vessel development. Required for cardiovascular development, particularly for intersomitic vein angiogenesis. Plays also a role in various processes in adults such as regulation of blood vessel formation, blood pressure, heart contractility, and heart failure. Acts upstream of the i/o type of G-alpha proteins in the differentiation of endothelium, erythroid cells, myeloid cells and cardiomyocytes. This chain is Apelin receptor (aplnr), found in Xenopus tropicalis (Western clawed frog).